The sequence spans 338 residues: Holliday junction branch migration complex subunit RuvB (338 aa).

The interval 1–180 (MTRLVTPDIT…FGVISRLEFY (180 aa)) is large ATPase domain (RuvB-L). Residues Leu19, Arg20, Gly61, Lys64, Thr65, Thr66, 127-129 (EDY), Arg170, Tyr180, and Arg217 contribute to the ATP site. Thr65 is a Mg(2+) binding site. Residues 181–251 (TDDELTTIVT…VVDESLKLLE (71 aa)) are small ATPAse domain (RuvB-S). Residues 254–338 (EKGFDHMDRT…PPSSSQGNLF (85 aa)) form a head domain (RuvB-H) region. DNA is bound by residues Arg290, Arg309, and Arg314.

This sequence belongs to the RuvB family. Homohexamer. Forms an RuvA(8)-RuvB(12)-Holliday junction (HJ) complex. HJ DNA is sandwiched between 2 RuvA tetramers; dsDNA enters through RuvA and exits via RuvB. An RuvB hexamer assembles on each DNA strand where it exits the tetramer. Each RuvB hexamer is contacted by two RuvA subunits (via domain III) on 2 adjacent RuvB subunits; this complex drives branch migration. In the full resolvosome a probable DNA-RuvA(4)-RuvB(12)-RuvC(2) complex forms which resolves the HJ.

It localises to the cytoplasm. The catalysed reaction is ATP + H2O = ADP + phosphate + H(+). The RuvA-RuvB-RuvC complex processes Holliday junction (HJ) DNA during genetic recombination and DNA repair, while the RuvA-RuvB complex plays an important role in the rescue of blocked DNA replication forks via replication fork reversal (RFR). RuvA specifically binds to HJ cruciform DNA, conferring on it an open structure. The RuvB hexamer acts as an ATP-dependent pump, pulling dsDNA into and through the RuvAB complex. RuvB forms 2 homohexamers on either side of HJ DNA bound by 1 or 2 RuvA tetramers; 4 subunits per hexamer contact DNA at a time. Coordinated motions by a converter formed by DNA-disengaged RuvB subunits stimulates ATP hydrolysis and nucleotide exchange. Immobilization of the converter enables RuvB to convert the ATP-contained energy into a lever motion, pulling 2 nucleotides of DNA out of the RuvA tetramer per ATP hydrolyzed, thus driving DNA branch migration. The RuvB motors rotate together with the DNA substrate, which together with the progressing nucleotide cycle form the mechanistic basis for DNA recombination by continuous HJ branch migration. Branch migration allows RuvC to scan DNA until it finds its consensus sequence, where it cleaves and resolves cruciform DNA. In Geobacter metallireducens (strain ATCC 53774 / DSM 7210 / GS-15), this protein is Holliday junction branch migration complex subunit RuvB.